The chain runs to 567 residues: DNA ligase (567 aa).

An ATP-binding site is contributed by E260. The N6-AMP-lysine intermediate role is filled by K262. Residues R267, R282, E312, F352, R427, and K433 each contribute to the ATP site.

The protein belongs to the ATP-dependent DNA ligase family. Requires Mg(2+) as cofactor.

It carries out the reaction ATP + (deoxyribonucleotide)n-3'-hydroxyl + 5'-phospho-(deoxyribonucleotide)m = (deoxyribonucleotide)n+m + AMP + diphosphate.. DNA ligase that seals nicks in double-stranded DNA during DNA replication, DNA recombination and DNA repair. The protein is DNA ligase of Methanococcoides burtonii (strain DSM 6242 / NBRC 107633 / OCM 468 / ACE-M).